The chain runs to 548 residues: Solute carrier family 22 member 7 (548 aa).

The next 12 membrane-spanning stretches (helical) occupy residues 21–41 (VALL…PIFL), 146–166 (AAST…GYLS), 180–200 (VSTL…MFAI), 204–224 (LTGS…LEWL), 234–254 (VLSS…GYLI), 259–279 (WLLL…WWVP), 346–366 (ISLC…GLSL), 376–397 (YQTQ…YLSV), 404–423 (LTQA…RLLV), 432–452 (TVLA…AYLF), 466–486 (MGLT…AALL), and 493–513 (LPKL…LLLP). Residues 522–548 (ETIQDVERKSAPTSLQEEEMPMKQVQN) form a disordered region.

This sequence belongs to the major facilitator (TC 2.A.1) superfamily. Organic cation transporter (TC 2.A.1.19) family.

It is found in the basolateral cell membrane. It localises to the apical cell membrane. The protein resides in the cell membrane. It carries out the reaction orotate(out) + L-glutamate(in) = orotate(in) + L-glutamate(out). It catalyses the reaction 3',5'-cyclic GMP(in) = 3',5'-cyclic GMP(out). The enzyme catalyses GMP(in) = GMP(out). The catalysed reaction is 2'-deoxyguanosine(in) = 2'-deoxyguanosine(out). It carries out the reaction GDP(in) = GDP(out). It catalyses the reaction guanosine(in) = guanosine(out). The enzyme catalyses GTP(in) = GTP(out). The catalysed reaction is 3',5'-cyclic AMP(in) = 3',5'-cyclic AMP(out). It carries out the reaction creatinine(in) = creatinine(out). It catalyses the reaction prostaglandin E2(out) = prostaglandin E2(in). The enzyme catalyses 2-oxoglutarate(in) = 2-oxoglutarate(out). The catalysed reaction is glutarate(in) = glutarate(out). It carries out the reaction urate(out) = urate(in). It catalyses the reaction estrone 3-sulfate(out) = estrone 3-sulfate(in). Its function is as follows. Functions as a Na(+)-independent bidirectional multispecific transporter. Contributes to the renal and hepatic elimination of endogenous organic compounds from the systemic circulation into the urine and bile, respectively. Capable of transporting a wide range of purine and pyrimidine nucleobases, nucleosides and nucleotides, with cGMP, 2'deoxyguanosine and GMP being the preferred substrates. Functions as a pH- and chloride-independent cGMP bidirectional facilitative transporter that can regulate both intracellular and extracellular levels of cGMP and may be involved in cGMP signaling pathways. Mediates orotate/glutamate bidirectional exchange and most likely display a physiological role in hepatic release of glutamate into the blood. Involved in renal secretion and possible reabsorption of creatinine. Able to uptake prostaglandin E2 (PGE2) and may contribute to PGE2 renal excretion. Also transports alpha-ketoglutarate and urate. Apart from the orotate/glutamate exchange, the counterions for the uptake of other SLC22A7/OAT2 substrates remain to be identified. In Pongo abelii (Sumatran orangutan), this protein is Solute carrier family 22 member 7 (SLC22A7).